We begin with the raw amino-acid sequence, 144 residues long: Cell division protein SepF (144 aa).

The segment at Asp16–Arg42 is disordered.

Belongs to the SepF family. Homodimer. Interacts with FtsZ.

It is found in the cytoplasm. Functionally, cell division protein that is part of the divisome complex and is recruited early to the Z-ring. Probably stimulates Z-ring formation, perhaps through the cross-linking of FtsZ protofilaments. Its function overlaps with FtsA. This chain is Cell division protein SepF, found in Lactobacillus gasseri (strain ATCC 33323 / DSM 20243 / BCRC 14619 / CIP 102991 / JCM 1131 / KCTC 3163 / NCIMB 11718 / NCTC 13722 / AM63).